The chain runs to 428 residues: MKQDSQSENESIVCDLSVSEDQRNVKFFSDLQTPIPKHLPFFMDVTLRDGNQALRRPWNLEQKETIFKQLLKLGVQGIEVGFASSNNQEFEACKYLSSIAPDNVVISSLSRAVEKEIEVSWKAIRFAPKPRIHIVYPVSAFTIQNVLKISPEKVLDRISQSVAYAKSLVGSKGEVQFSGEHFGDSLENLDFAAEAFQIALNNGADVVNLPNTVERYRPWLFVSMVKAVANLLPEDTRISIHTHNDLGMATATTVESYFAGAVQLETALNGLGERAGNTNTYEVAIALHNCGVEVPLNFSTIYETSRLVSYLSEIPIYEKAPLIGEDVISHRSGIHQDGVAKTRHLQKGAYRAFDAALIGRPEGDRIEFTNQSGKSAVYCILKDAGENITLEEAGRLQPILKKISEDLGRRELTLEEIRIEWNRLLRAI.

Residues 40-302 (PFFMDVTLRD…EVPLNFSTIY (263 aa)) form the Pyruvate carboxyltransferase domain. The Mn(2+) site is built by aspartate 49, histidine 241, histidine 243, and asparagine 277.

The protein belongs to the alpha-IPM synthase/homocitrate synthase family. LeuA type 1 subfamily. In terms of assembly, homodimer. Mn(2+) serves as cofactor.

The protein localises to the cytoplasm. It catalyses the reaction 3-methyl-2-oxobutanoate + acetyl-CoA + H2O = (2S)-2-isopropylmalate + CoA + H(+). It functions in the pathway amino-acid biosynthesis; L-leucine biosynthesis; L-leucine from 3-methyl-2-oxobutanoate: step 1/4. Its function is as follows. Catalyzes the condensation of the acetyl group of acetyl-CoA with 3-methyl-2-oxobutanoate (2-ketoisovalerate) to form 3-carboxy-3-hydroxy-4-methylpentanoate (2-isopropylmalate). Has high alpha-isopropylmalate synthase activity and low citramalate synthase activity. This chain is 2-isopropylmalate synthase 2, found in Leptospira interrogans serogroup Icterohaemorrhagiae serovar Lai (strain 56601).